A 386-amino-acid chain; its full sequence is uncharacterized protein (386 aa).

This sequence belongs to the TelA family.

This is an uncharacterized protein from Bacillus subtilis (strain 168).